The following is a 598-amino-acid chain: Arginine--tRNA ligase (598 aa).

The short motif at 131-141 is the 'HIGH' region element; it reads ANPTGPMHVGH. Residues 288–308 form a disordered region; that stretch reads KLPPPKSKKGQPPAQPQPDEE.

This sequence belongs to the class-I aminoacyl-tRNA synthetase family. Monomer.

Its subcellular location is the cytoplasm. The catalysed reaction is tRNA(Arg) + L-arginine + ATP = L-arginyl-tRNA(Arg) + AMP + diphosphate. The polypeptide is Arginine--tRNA ligase (Anaeromyxobacter sp. (strain K)).